Consider the following 315-residue polypeptide: 4-hydroxy-3-methylbut-2-enyl diphosphate reductase (315 aa).

Cys12 contributes to the [4Fe-4S] cluster binding site. 2 residues coordinate (2E)-4-hydroxy-3-methylbut-2-enyl diphosphate: His43 and His81. Residues His43 and His81 each contribute to the dimethylallyl diphosphate site. Residues His43 and His81 each contribute to the isopentenyl diphosphate site. Cys103 is a binding site for [4Fe-4S] cluster. His131 is a (2E)-4-hydroxy-3-methylbut-2-enyl diphosphate binding site. Position 131 (His131) interacts with dimethylallyl diphosphate. An isopentenyl diphosphate-binding site is contributed by His131. Glu133 functions as the Proton donor in the catalytic mechanism. (2E)-4-hydroxy-3-methylbut-2-enyl diphosphate is bound at residue Thr172. Position 200 (Cys200) interacts with [4Fe-4S] cluster. 3 residues coordinate (2E)-4-hydroxy-3-methylbut-2-enyl diphosphate: Ser228, Asn230, and Ser273. Dimethylallyl diphosphate is bound by residues Ser228, Asn230, and Ser273. Ser228, Asn230, and Ser273 together coordinate isopentenyl diphosphate.

Belongs to the IspH family. [4Fe-4S] cluster serves as cofactor.

The catalysed reaction is isopentenyl diphosphate + 2 oxidized [2Fe-2S]-[ferredoxin] + H2O = (2E)-4-hydroxy-3-methylbut-2-enyl diphosphate + 2 reduced [2Fe-2S]-[ferredoxin] + 2 H(+). It carries out the reaction dimethylallyl diphosphate + 2 oxidized [2Fe-2S]-[ferredoxin] + H2O = (2E)-4-hydroxy-3-methylbut-2-enyl diphosphate + 2 reduced [2Fe-2S]-[ferredoxin] + 2 H(+). The protein operates within isoprenoid biosynthesis; dimethylallyl diphosphate biosynthesis; dimethylallyl diphosphate from (2E)-4-hydroxy-3-methylbutenyl diphosphate: step 1/1. It participates in isoprenoid biosynthesis; isopentenyl diphosphate biosynthesis via DXP pathway; isopentenyl diphosphate from 1-deoxy-D-xylulose 5-phosphate: step 6/6. In terms of biological role, catalyzes the conversion of 1-hydroxy-2-methyl-2-(E)-butenyl 4-diphosphate (HMBPP) into a mixture of isopentenyl diphosphate (IPP) and dimethylallyl diphosphate (DMAPP). Acts in the terminal step of the DOXP/MEP pathway for isoprenoid precursor biosynthesis. The protein is 4-hydroxy-3-methylbut-2-enyl diphosphate reductase of Exiguobacterium sibiricum (strain DSM 17290 / CCUG 55495 / CIP 109462 / JCM 13490 / 255-15).